The sequence spans 360 residues: Tryptophan--tRNA ligase, mitochondrial (360 aa).

The N-terminal 18 residues, M1–A18, are a transit peptide targeting the mitochondrion. ATP contacts are provided by residues Q42 and H48–N51. D167 serves as a coordination point for L-tryptophan. ATP is bound by residues G179–D181, V217, and K226–S230.

This sequence belongs to the class-I aminoacyl-tRNA synthetase family. Brain.

It localises to the mitochondrion matrix. The protein localises to the mitochondrion. It carries out the reaction tRNA(Trp) + L-tryptophan + ATP = L-tryptophyl-tRNA(Trp) + AMP + diphosphate + H(+). Its function is as follows. Catalyzes the attachment of tryptophan to tRNA(Trp) in a two-step reaction: tryptophan is first activated by ATP to form Trp-AMP and then transferred to the acceptor end of tRNA(Trp). The chain is Tryptophan--tRNA ligase, mitochondrial (WARS2) from Homo sapiens (Human).